Consider the following 154-residue polypeptide: uncharacterized protein (154 aa).

The protein resides in the mitochondrion. This is an uncharacterized protein from Marchantia polymorpha (Common liverwort).